A 102-amino-acid polypeptide reads, in one-letter code: Protein GOLVEN 4 (102 aa).

The signal sequence occupies residues 1–27 (MEMKKWSYANLITLALLFLFFIILLLA). Residues 28-89 (FQGGSRDDDH…QEREVYVELR (62 aa)) constitute a propeptide that is removed on maturation. A disordered region spans residues 56–78 (KSLKPINPTKKNGFEYPDQGSHD). Tyrosine 91 carries the sulfotyrosine modification. Proline 99 bears the Hydroxyproline mark.

The protein belongs to the RGF family. As to quaternary structure, binds to LRR receptor-like serine/threonine-protein kinases to trigger their dimerization with SERK proteins and subsequent signaling. As to expression, expressed in roots and sepals.

The protein localises to the secreted. In terms of biological role, signaling peptide (root growth factor) that promotes root hairs formation and growth. Maintains the postembryonic root stem cell niche. Regulates the pattern of root growth and lateral root development by modulating the length and the number of cortical cells in the root apical meristem (RAM), and the anticlinal asymmetric cell divisions in lateral root initiation cells. The polypeptide is Protein GOLVEN 4 (Arabidopsis thaliana (Mouse-ear cress)).